Here is a 460-residue protein sequence, read N- to C-terminus: A-type ATP synthase subunit B (460 aa).

Belongs to the ATPase alpha/beta chains family. As to quaternary structure, has multiple subunits with at least A(3), B(3), C, D, E, F, H, I and proteolipid K(x).

It localises to the cell membrane. Functionally, component of the A-type ATP synthase that produces ATP from ADP in the presence of a proton gradient across the membrane. The B chain is a regulatory subunit. This chain is A-type ATP synthase subunit B, found in Methanosarcina barkeri.